Consider the following 113-residue polypeptide: HIG1 domain-containing protein C25B8.07c, mitochondrial (113 aa).

A disordered region spans residues 1–27 (MSSKLPKKSEENLELPTFPASEESLSR). The HIG1 domain occupies 12-103 (NLELPTFPAS…PPRREAPSNS (92 aa)). The next 2 helical transmembrane spans lie at 39 to 59 (PFIPLGCLMTVGTFLASGYYI) and 75 to 95 (VMSQGFTLAALAFSVLFIGPP).

The protein resides in the mitochondrion membrane. The sequence is that of HIG1 domain-containing protein C25B8.07c, mitochondrial from Schizosaccharomyces pombe (strain 972 / ATCC 24843) (Fission yeast).